Here is a 350-residue protein sequence, read N- to C-terminus: Phenylalanine--tRNA ligase alpha subunit (350 aa).

Glutamate 262 serves as a coordination point for Mg(2+).

This sequence belongs to the class-II aminoacyl-tRNA synthetase family. Phe-tRNA synthetase alpha subunit type 1 subfamily. As to quaternary structure, tetramer of two alpha and two beta subunits. It depends on Mg(2+) as a cofactor.

It localises to the cytoplasm. The enzyme catalyses tRNA(Phe) + L-phenylalanine + ATP = L-phenylalanyl-tRNA(Phe) + AMP + diphosphate + H(+). This chain is Phenylalanine--tRNA ligase alpha subunit, found in Thermus thermophilus (strain ATCC BAA-163 / DSM 7039 / HB27).